The primary structure comprises 159 residues: Probable RNA-binding protein EIF1AD (159 aa).

Positions 18 to 93 (MMEDDYALPT…VKAEICKILT (76 aa)) constitute an S1-like domain. Residues 109 to 159 (KFTKKPVQEEATSQNKDDSDFEDDLLPNTNRPVNRDSSDEEEDEETSSEED) form a disordered region. The segment covering 146–159 (SDEEEDEETSSEED) has biased composition (acidic residues).

It belongs to the EIF1AD family.

This Drosophila melanogaster (Fruit fly) protein is Probable RNA-binding protein EIF1AD.